The following is a 222-amino-acid chain: Eukaryotic translation initiation factor 3 subunit K (222 aa).

Residues Y46–K208 enclose the PCI domain.

This sequence belongs to the eIF-3 subunit K family. As to quaternary structure, component of the eukaryotic translation initiation factor 3 (eIF-3) complex. The eIF-3 complex interacts with pix.

It localises to the cytoplasm. In terms of biological role, component of the eukaryotic translation initiation factor 3 (eIF-3) complex, which is involved in protein synthesis of a specialized repertoire of mRNAs and, together with other initiation factors, stimulates binding of mRNA and methionyl-tRNAi to the 40S ribosome. The eIF-3 complex specifically targets and initiates translation of a subset of mRNAs involved in cell proliferation. This is Eukaryotic translation initiation factor 3 subunit K from Drosophila erecta (Fruit fly).